A 120-amino-acid chain; its full sequence is Protein TCL1B4 (120 aa).

This sequence belongs to the TCL1 family.

The polypeptide is Protein TCL1B4 (Tcl1b4) (Mus musculus (Mouse)).